A 338-amino-acid polypeptide reads, in one-letter code: MANRANRHAARTEDSDNTINYVQCDGLAVMKMVKHCHEESSNMDLAQGALLGLVVDKCLEITNCFPFPKSGDETMDEEMYQLTVMRRLRRVNVDHLHVGWYQSSDVGNSLSMALLESQYHYQTSIEESVVVVYDTQKSSRGFLCLKAYRLTPQAIQMYKDGDFTPEAFRTLKVGYENLFAEIPIVIKNSPLTNIMMSELNELLPEDKGHNFLDLGTATVLENQMRSLIERVDELYQEAVRYNKYQQVVFKQDTEKHRALAKLAAENAVRTSKGEPTVPEEEVIKQFRPMTAPNRLTATITSGQINTHAQHIAQFCSQSLAKLFITESLQIAKEAKETK.

The MPN domain occupies 22 to 154; sequence VQCDGLAVMK…LKAYRLTPQA (133 aa).

The protein belongs to the eIF-3 subunit H family. In terms of assembly, component of the eukaryotic translation initiation factor 3 (eIF-3) complex. The eIF-3 complex interacts with pix. Interacts with mxt.

The protein resides in the cytoplasm. In terms of biological role, component of the eukaryotic translation initiation factor 3 (eIF-3) complex, which is involved in protein synthesis of a specialized repertoire of mRNAs and, together with other initiation factors, stimulates binding of mRNA and methionyl-tRNAi to the 40S ribosome. The eIF-3 complex specifically targets and initiates translation of a subset of mRNAs involved in cell proliferation. The sequence is that of Eukaryotic translation initiation factor 3 subunit H from Drosophila melanogaster (Fruit fly).